The primary structure comprises 661 residues: Envelope glycoprotein (661 aa).

Residues 1–33 (MEGPAFSKSPKDKTIERAFLGVLGILFVTGGLA) form the signal peptide. The segment at 32-267 (LASRDNPHQV…KVTDLGPRVP (236 aa)) is receptor-binding domain (RBD). The Extracellular portion of the chain corresponds to 34-606 (SRDNPHQVYN…FNRSPWFTTL (573 aa)). N-linked (GlcNAc...) asparagine; by host glycosylation is present at Asn43. 5 disulfide bridges follow: Cys77–Cys129, Cys103–Cys118, Cys104–Cys114, Cys152–Cys172, and Cys164–Cys177. His86 contacts Zn(2+). Asp117 is a Zn(2+) binding site. The N-linked (GlcNAc...) asparagine; by host glycan is linked to Asn199. Cys209 and Cys215 form a disulfide bridge. The segment at 268–308 (IGPNPVLSDQRPPSRPVPARPPPPSASPSTPTIPPQQGTGD) is disordered. Residues 280–301 (PSRPVPARPPPPSASPSTPTIP) are compositionally biased toward pro residues. A glycan (N-linked (GlcNAc...) asparagine; by host) is linked at Asn322. 6 cysteine pairs are disulfide-bonded: Cys332–Cys335, Cys332–Cys559, Cys362–Cys416, Cys381–Cys393, Cys423–Cys436, and Cys551–Cys558. The short motif at 332 to 335 (CWLC) is the CXXC element. An N-linked (GlcNAc...) asparagine; by host glycan is attached at Asn361. Asn394 and Asn430 each carry an N-linked (GlcNAc...) asparagine; by host glycan. Positions 468 to 488 (VSLTLALLPEGLTMGGIAAGV) are fusion peptide. Residues 497–533 (ATQQFQQLQAAMHNDLKEVEKSITNLEKSLTSLSEVV) adopt a coiled-coil conformation. Residues 534-550 (LQNRRGLDLLFLKEGGL) are immunosuppression. The CX6CC motif lies at 551–559 (CAALKEECC). A helical transmembrane segment spans residues 607 to 627 (ISTIMGPLIVLLLILLFGPCI). Cys626 carries the S-palmitoyl cysteine; by host lipid modification. Over 628–661 (LNRLVQFVKDRISVVQALVLTQQYHQLKPIEYEP) the chain is Cytoplasmic. Positions 651–654 (YHQL) match the YXXL motif; contains endocytosis signal motif.

In terms of assembly, the mature envelope protein (Env) consists of a trimer of SU-TM heterodimers attached by a labile interchain disulfide bond. Specific enzymatic cleavages in vivo yield mature proteins. Envelope glycoproteins are synthesized as an inactive precursor that is N-glycosylated and processed likely by host cell furin or by a furin-like protease in the Golgi to yield the mature SU and TM proteins. The cleavage site between SU and TM requires the minimal sequence [KR]-X-[KR]-R. The R-peptide is released from the C-terminus of the cytoplasmic tail of the TM protein upon particle formation as a result of proteolytic cleavage by the viral protease. Cleavage of this peptide is required for TM to become fusogenic. Post-translationally, the CXXC motif is highly conserved across a broad range of retroviral envelope proteins. It is thought to participate in the formation of a labile disulfide bond possibly with the CX6CC motif present in the transmembrane protein. Isomerization of the intersubunit disulfide bond to an SU intrachain disulfide bond is thought to occur upon receptor recognition in order to allow membrane fusion. In terms of processing, the transmembrane protein is palmitoylated. The R-peptide is palmitoylated.

The protein localises to the virion membrane. The protein resides in the host cell membrane. Its function is as follows. The surface protein (SU) attaches the virus to the host cell by binding to its receptor. This interaction triggers the refolding of the transmembrane protein (TM) and is thought to activate its fusogenic potential by unmasking its fusion peptide. Fusion occurs at the host cell plasma membrane. In terms of biological role, the transmembrane protein (TM) acts as a class I viral fusion protein. Under the current model, the protein has at least 3 conformational states: pre-fusion native state, pre-hairpin intermediate state, and post-fusion hairpin state. During viral and target cell membrane fusion, the coiled coil regions (heptad repeats) assume a trimer-of-hairpins structure, positioning the fusion peptide in close proximity to the C-terminal region of the ectodomain. The formation of this structure appears to drive apposition and subsequent fusion of viral and target cell membranes. Membranes fusion leads to delivery of the nucleocapsid into the cytoplasm. This Mus musculus (Mouse) protein is Envelope glycoprotein (env).